Consider the following 427-residue polypeptide: Tegument protein VP16 homolog (427 aa).

The protein belongs to the herpesviridae tegument protein VP16 protein family.

The protein resides in the virion tegument. Its subcellular location is the host nucleus. In terms of biological role, transcriptional activator of immediate-early (IE) gene products (alpha genes). Acts as a key activator of lytic infection by initiating the lytic program through the assembly of the transcriptional regulatory VP16-induced complex composed of VP16 and two cellular factors, HCFC1 and POU2F1. VP16-induced complex represents a regulatory switch: when it is on, it promotes IE-gene expression and thus lytic infection, and when it is off, it limits IE-gene transcription favoring latent infection. Functionally, may play a role in the aggregation of tegument proteins around nucleocapsids during virus morphogenesis. The sequence is that of Tegument protein VP16 homolog (MDV061) from Gallus gallus (Chicken).